We begin with the raw amino-acid sequence, 147 residues long: uncharacterized protein (147 aa).

The chain crosses the membrane as a helical span at residues 71 to 91; the sequence is IDILAFVAGTVGVGSLVLLQF.

Its subcellular location is the virion. It is found in the host membrane. This is an uncharacterized protein from Acanthamoeba polyphaga mimivirus (APMV).